Here is a 323-residue protein sequence, read N- to C-terminus: Oligodendrocyte transcription factor 2 (323 aa).

Polar residues predominate over residues 1 to 13 (MDSDASLVSSRPS). The disordered stretch occupies residues 1-107 (MDSDASLVSS…KKQMTEPELQ (107 aa)). Low complexity predominate over residues 77–93 (SSSSSTSSSTSSAATSS). The 55-residue stretch at 108–162 (QLRLKINSRERKRMHDLNIAMDGLREVMPYAHGPSVRKLSKIATLLLARNYILML) folds into the bHLH domain.

As to quaternary structure, interacts with NKX2-2. Interacts with ZNF488. Expressed specifically in the brain.

It localises to the nucleus. Its subcellular location is the cytoplasm. Required for oligodendrocyte and motor neuron specification in the spinal cord, as well as for the development of somatic motor neurons in the hindbrain. Functions together with ZNF488 to promote oligodendrocyte differentiation. Cooperates with OLIG1 to establish the pMN domain of the embryonic neural tube. Antagonist of V2 interneuron and of NKX2-2-induced V3 interneuron development. The sequence is that of Oligodendrocyte transcription factor 2 (Olig2) from Mus musculus (Mouse).